A 136-amino-acid polypeptide reads, in one-letter code: Large ribosomal subunit protein uL16c (136 aa).

The protein belongs to the universal ribosomal protein uL16 family. Part of the 50S ribosomal subunit.

It is found in the plastid. The protein resides in the chloroplast. This chain is Large ribosomal subunit protein uL16c, found in Illicium oligandrum (Star anise).